Consider the following 60-residue polypeptide: UPF0434 protein Dtpsy_1553 (60 aa).

This sequence belongs to the UPF0434 family.

The chain is UPF0434 protein Dtpsy_1553 from Acidovorax ebreus (strain TPSY) (Diaphorobacter sp. (strain TPSY)).